The sequence spans 275 residues: Translation initiation factor 2 subunit alpha (275 aa).

Residues 12-83 (GEFVIATVKS…NKGHIDLSLK (72 aa)) form the S1 motif domain.

It belongs to the eIF-2-alpha family. As to quaternary structure, heterotrimer composed of an alpha, a beta and a gamma chain.

In terms of biological role, eIF-2 functions in the early steps of protein synthesis by forming a ternary complex with GTP and initiator tRNA. The protein is Translation initiation factor 2 subunit alpha of Thermococcus onnurineus (strain NA1).